The following is a 659-amino-acid chain: L-type lectin-domain containing receptor kinase V.7 (659 aa).

A signal peptide spans 1-25 (MSHKVLQIVLVLLLTLFSSTHNSNG). The interval 22 to 244 (NSNGNFLMEE…GALYYVMQFS (223 aa)) is legume-lectin like. The Extracellular segment spans residues 26-275 (NFLMEEAAAA…PKKSYDRTRR (250 aa)). N-linked (GlcNAc...) asparagine glycosylation is found at Asn-45, Asn-64, Asn-110, and Asn-192. The chain crosses the membrane as a helical span at residues 276-296 (ILAVCLTLAVFTALVASGIGF). Residues 297–659 (VFYVRHKKVK…LTNSFVSHGR (363 aa)) are Cytoplasmic-facing. Residues 333-595 (FKEKQLLGKG…GLLCAHHTEL (263 aa)) form the Protein kinase domain. ATP-binding positions include 339 to 347 (LGKGGFGQV) and Lys-362. Residue Asp-462 is the Proton acceptor of the active site.

The protein in the C-terminal section; belongs to the protein kinase superfamily. Ser/Thr protein kinase family. It in the N-terminal section; belongs to the leguminous lectin family.

The protein localises to the cell membrane. The enzyme catalyses L-seryl-[protein] + ATP = O-phospho-L-seryl-[protein] + ADP + H(+). The catalysed reaction is L-threonyl-[protein] + ATP = O-phospho-L-threonyl-[protein] + ADP + H(+). Functionally, involved in resistance response to the pathogenic oomycetes Phytophthora infestans and Phytophthora capsici and to the pathogenic bacteria Pseudomonas syringae. The protein is L-type lectin-domain containing receptor kinase V.7 of Arabidopsis thaliana (Mouse-ear cress).